The sequence spans 673 residues: eEF1A lysine and N-terminal methyltransferase homolog (673 aa).

It belongs to the methyltransferase superfamily.

It catalyses the reaction L-lysyl-[protein] + S-adenosyl-L-methionine = N(6)-methyl-L-lysyl-[protein] + S-adenosyl-L-homocysteine + H(+). It carries out the reaction N(6)-methyl-L-lysyl-[protein] + S-adenosyl-L-methionine = N(6),N(6)-dimethyl-L-lysyl-[protein] + S-adenosyl-L-homocysteine + H(+). The catalysed reaction is N-terminal glycyl-L-lysyl-L-glutamyl-[protein] + 3 S-adenosyl-L-methionine = N-terminal N,N,N-trimethyl-glycyl-L-lysyl-L-glutamyl-[protein] + 3 S-adenosyl-L-homocysteine + 3 H(+). Functionally, dual methyltransferase. It catalyzes N-terminal methylation of target proteins via its C-terminus. It catalyzes dimethylation on lysine residues of target proteins via its N-terminus. The polypeptide is eEF1A lysine and N-terminal methyltransferase homolog (Drosophila melanogaster (Fruit fly)).